A 544-amino-acid chain; its full sequence is Phosphomannomutase (544 aa).

Ser145 functions as the Phosphoserine intermediate in the catalytic mechanism. Positions 145, 297, 299, and 301 each coordinate Mg(2+).

Belongs to the phosphohexose mutase family. Mg(2+) serves as cofactor.

It catalyses the reaction alpha-D-mannose 1-phosphate = D-mannose 6-phosphate. This chain is Phosphomannomutase (manB), found in Mycoplasmoides pirum (Mycoplasma pirum).